The primary structure comprises 149 residues: FKBP-type 16 kDa peptidyl-prolyl cis-trans isomerase (149 aa).

Residues 2-72 (SESVQSNSAV…FSLEPDAAFG (71 aa)) enclose the PPIase FKBP-type domain.

It belongs to the FKBP-type PPIase family.

The catalysed reaction is [protein]-peptidylproline (omega=180) = [protein]-peptidylproline (omega=0). Functionally, PPIases accelerate the folding of proteins. Substrate specificity carried out with 'Suc-Ala-Xaa-Pro-Phe-4-nitroanilide', where Xaa is the amino acid tested, was found to be Phe &gt; Leu &gt;&gt; Ile &gt; Lys = Ala &gt; Trp &gt; His &gt;&gt; Gln. This Escherichia coli O6:H1 (strain CFT073 / ATCC 700928 / UPEC) protein is FKBP-type 16 kDa peptidyl-prolyl cis-trans isomerase (fkpB).